Consider the following 254-residue polypeptide: Probable phosphatase Sbal223_2880 (254 aa).

Zn(2+) contacts are provided by histidine 8, histidine 10, histidine 16, histidine 41, glutamate 74, histidine 102, histidine 132, aspartate 193, and histidine 195.

This sequence belongs to the PHP family. The cofactor is Zn(2+).

The chain is Probable phosphatase Sbal223_2880 from Shewanella baltica (strain OS223).